The sequence spans 336 residues: Tetraacyldisaccharide 4'-kinase (336 aa).

58–65 (AVGGSGKT) serves as a coordination point for ATP.

This sequence belongs to the LpxK family.

The catalysed reaction is a lipid A disaccharide + ATP = a lipid IVA + ADP + H(+). It participates in glycolipid biosynthesis; lipid IV(A) biosynthesis; lipid IV(A) from (3R)-3-hydroxytetradecanoyl-[acyl-carrier-protein] and UDP-N-acetyl-alpha-D-glucosamine: step 6/6. Functionally, transfers the gamma-phosphate of ATP to the 4'-position of a tetraacyldisaccharide 1-phosphate intermediate (termed DS-1-P) to form tetraacyldisaccharide 1,4'-bis-phosphate (lipid IVA). The sequence is that of Tetraacyldisaccharide 4'-kinase from Aromatoleum aromaticum (strain DSM 19018 / LMG 30748 / EbN1) (Azoarcus sp. (strain EbN1)).